The chain runs to 503 residues: AMP phosphorylase (503 aa).

AMP-binding positions include Gly168, 194–199 (SRAITS), and Thr203. Asp256 (proton donor) is an active-site residue. Residues Ser264 and Lys288 each contribute to the AMP site.

The protein belongs to the thymidine/pyrimidine-nucleoside phosphorylase family. Type 2 subfamily. As to quaternary structure, forms an exceptionally large macromolecular structure (&gt;40-mers) in solution.

The enzyme catalyses AMP + phosphate = alpha-D-ribose 1,5-bisphosphate + adenine. It catalyses the reaction CMP + phosphate = cytosine + alpha-D-ribose 1,5-bisphosphate. It carries out the reaction UMP + phosphate = alpha-D-ribose 1,5-bisphosphate + uracil. Its activity is regulated as follows. AMP phosphorolysis is allosterically regulated by the substrate AMP. Catalyzes the conversion of AMP and phosphate to adenine and ribose 1,5-bisphosphate (R15P). Exhibits phosphorylase activity toward CMP, dCMP and UMP in addition to AMP. Functions in an archaeal AMP degradation pathway, together with R15P isomerase and RubisCO. The protein is AMP phosphorylase of Thermococcus kodakarensis (strain ATCC BAA-918 / JCM 12380 / KOD1) (Pyrococcus kodakaraensis (strain KOD1)).